A 502-amino-acid polypeptide reads, in one-letter code: Putative ZDHHC-type palmitoyltransferase 3 (502 aa).

The tract at residues 1–80 (MVNNNNKNNK…ESTNENNKKL (80 aa)) is disordered. Residues 10–30 (KINDRENEENEKNKKKDKIYE) are compositionally biased toward basic and acidic residues. A compositionally biased stretch (low complexity) spans 31–52 (NKIGINENNNENNNYQNENFIY). A glycan (N-linked (GlcNAc...) asparagine) is linked at Asn58. Over residues 59 to 73 (DTQEGDISEIQEEST) the composition is skewed to acidic residues. The next 2 helical transmembrane spans lie at 104–124 (FFIV…IKLV) and 134–154 (LEIS…YNLY). Residues 200 to 281 (IANDDPISSS…NNNNNNNKNQ (82 aa)) are disordered. Residues 203–212 (DDPISSSSDF) show a composition bias toward low complexity. Residues 213–222 (SDSDDDDQDE) are compositionally biased toward acidic residues. The segment covering 248 to 280 (NSNNNNSNNNNNNNKNRNRNNNNNNNNNNNNKN) has biased composition (low complexity). N-linked (GlcNAc...) asparagine glycosylation is found at Asn252 and Asn280. The 51-residue stretch at 299–349 (KFCITCGLYREPRSFHCSTCNNCVENFDHHCVWIGNCIGRRNYREFFYFIT) folds into the DHHC domain. Residue Cys329 is the S-palmitoyl cysteine intermediate of the active site. A helical transmembrane segment spans residues 344 to 364 (FFYFITTTLIYALYLLSMSIV). Residues Asn371, Asn388, and Asn393 are each glycosylated (N-linked (GlcNAc...) asparagine). Residues 419-439 (GLCIFIIIFGFIMSLLLGFLV) traverse the membrane as a helical segment. Residues Asn449, Asn483, and Asn494 are each glycosylated (N-linked (GlcNAc...) asparagine).

It belongs to the DHHC palmitoyltransferase family.

Its subcellular location is the membrane. It carries out the reaction L-cysteinyl-[protein] + hexadecanoyl-CoA = S-hexadecanoyl-L-cysteinyl-[protein] + CoA. In Dictyostelium discoideum (Social amoeba), this protein is Putative ZDHHC-type palmitoyltransferase 3.